A 38-amino-acid polypeptide reads, in one-letter code: Large ribosomal subunit protein bL36 (38 aa).

This sequence belongs to the bacterial ribosomal protein bL36 family.

The polypeptide is Large ribosomal subunit protein bL36 (Buchnera aphidicola subsp. Schizaphis graminum (strain Sg)).